The primary structure comprises 178 residues: Deoxycytidylate deaminase (178 aa).

Residues 14–145 (EWPEYFMAVA…EETTAARLLF (132 aa)) enclose the CMP/dCMP-type deaminase domain. Position 84 (His84) interacts with Zn(2+). Glu86 serves as the catalytic Proton donor. Zn(2+) is bound by residues Cys110 and Cys113. A Phosphoserine modification is found at Ser174.

It belongs to the cytidine and deoxycytidylate deaminase family. Homohexamer. It depends on Zn(2+) as a cofactor.

It carries out the reaction dCMP + H2O + H(+) = dUMP + NH4(+). It catalyses the reaction 5-hydroxymethyl-dCMP + H2O + H(+) = 5-hydroxymethyl-dUMP + NH4(+). With respect to regulation, allosteric enzyme whose activity is greatly influenced by the end products of its metabolic pathway, dCTP and dTTP. Functionally, catalyzes the deamination of dCMP to dUMP, providing the nucleoside monophosphate substrate for the thymidylate synthase/TYMS. Also, part of a nucleotide salvage pathway that eliminates epigenetically modified 5-hydroxymethyl-dCMP (hmdCMP) in a two-step process entailing deamination to cytotoxic 5-hydroxymethyl-dUMP (hmdUMP), followed by its hydrolysis into 5-hydroxymethyluracil (hmU) and 2-deoxy-D-ribose 5-phosphate (deoxyribosephosphate). Catalyzes the first step in that pathway, the deamination of 5-hydroxymethyl-dCMP (hmdCMP). In Mus musculus (Mouse), this protein is Deoxycytidylate deaminase.